We begin with the raw amino-acid sequence, 214 residues long: MAMRQYAAATAASSSFRARPRARPSCLPAAALPLAPCCGVAWSRASYRRASVRAMGAASSSSSSSSSSPSPQGQAQAQAQGKPNYSTSLTDEEWRKRLTKDQYYITRQKGTERAFTGEYWNTKTPGIYHCVCCDTPLFESSTKFDSGTGWPSYYQPIGDNVKCKLDMSIIFMPRTEVLCAVCDAHLGHVFDDGPRPTGKRYCINSASLKLKKTQ.

Residues 1 to 53 constitute a chloroplast transit peptide; sequence MAMRQYAAATAASSSFRARPRARPSCLPAAALPLAPCCGVAWSRASYRRASVR. Residues 58–81 show a composition bias toward low complexity; that stretch reads ASSSSSSSSSSPSPQGQAQAQAQG. The interval 58-91 is disordered; sequence ASSSSSSSSSSPSPQGQAQAQAQGKPNYSTSLTD. One can recognise a MsrB domain in the interval 91-213; that stretch reads DEEWRKRLTK…NSASLKLKKT (123 aa). The Zn(2+) site is built by C130, C133, C179, and C182. The Nucleophile role is filled by C202.

The protein belongs to the MsrB Met sulfoxide reductase family. Zn(2+) is required as a cofactor. As to expression, expressed in leaves and flowers.

It localises to the plastid. The protein localises to the chloroplast. The enzyme catalyses L-methionyl-[protein] + [thioredoxin]-disulfide + H2O = L-methionyl-(R)-S-oxide-[protein] + [thioredoxin]-dithiol. Catalyzes the reduction of methionine sulfoxide (MetSO) to methionine in proteins. Involved in abiotic stress response. Plays a protective role against oxidative stress by restoring activity to proteins that have been inactivated by methionine oxidation. MSRB family specifically reduces the MetSO R-enantiomer. The polypeptide is Peptide methionine sulfoxide reductase B1, chloroplastic (Oryza sativa subsp. japonica (Rice)).